A 165-amino-acid chain; its full sequence is Shikimate kinase (165 aa).

12 to 17 (GCGKST) provides a ligand contact to ATP. A Mg(2+)-binding site is contributed by S16. D34, R57, and G79 together coordinate substrate. Position 116 (R116) interacts with ATP. Residue R133 coordinates substrate.

The protein belongs to the shikimate kinase family. In terms of assembly, monomer. Mg(2+) serves as cofactor.

The protein localises to the cytoplasm. It catalyses the reaction shikimate + ATP = 3-phosphoshikimate + ADP + H(+). The protein operates within metabolic intermediate biosynthesis; chorismate biosynthesis; chorismate from D-erythrose 4-phosphate and phosphoenolpyruvate: step 5/7. Functionally, catalyzes the specific phosphorylation of the 3-hydroxyl group of shikimic acid using ATP as a cosubstrate. This is Shikimate kinase from Clostridium botulinum (strain Eklund 17B / Type B).